A 56-amino-acid chain; its full sequence is MAVQQNKKSRSKRGMRRSHDSLSTAQLSVDATSGELHLRHNVTADGFYRGKKVINK.

Positions 1–34 (MAVQQNKKSRSKRGMRRSHDSLSTAQLSVDATSG) are disordered. The span at 7–16 (KKSRSKRGMR) shows a compositional bias: basic residues. Over residues 21–31 (SLSTAQLSVDA) the composition is skewed to polar residues.

Belongs to the bacterial ribosomal protein bL32 family.

The sequence is that of Large ribosomal subunit protein bL32 from Shewanella frigidimarina (strain NCIMB 400).